A 516-amino-acid polypeptide reads, in one-letter code: Putative glucosylceramidase 2 (516 aa).

An N-terminal signal peptide occupies residues 1-23 (MSIAWSCFVLGLFALASLQVALA). The active-site Proton donor is Glu-254. The active-site Nucleophile is the Glu-358.

This sequence belongs to the glycosyl hydrolase 30 family.

It carries out the reaction a beta-D-glucosylceramide + H2O = an N-acyl-sphingoid base + D-glucose. The catalysed reaction is a beta-D-glucosyl-(1&lt;-&gt;1')-N-acylsphing-4-enine + H2O = an N-acylsphing-4-enine + D-glucose. The enzyme catalyses an N-acyl-1-beta-D-glucosyl-15-methylhexadecasphing-4-enine + H2O = an N-acyl-15-methylhexadecasphing-4-enine + D-glucose. Its pathway is lipid metabolism; sphingolipid metabolism. Glucosylceramidase that catalyzes the hydrolysis of glucosylceramides into free ceramides and glucose. C.elegans contain specific sphingoid bases, which are unique or different in structure compared to the sphingoid bases found in other animals. Two examples of these distinctive compounds are: 15-methylhexadecasphinganine and 15-methylhexadecasphing-4-enine. The sequence is that of Putative glucosylceramidase 2 (gba-2) from Caenorhabditis elegans.